The chain runs to 725 residues: D-(-)-3-hydroxybutyrate oligomer hydrolase (725 aa).

The first 22 residues, 1–22, serve as a signal peptide directing secretion; that stretch reads MNTTRDANRLRQRASLSGLALA. Ser322 functions as the Charge relay system in the catalytic mechanism.

The protein belongs to the D-(-)-3-hydroxybutyrate oligomer hydrolase family.

The protein localises to the secreted. The enzyme catalyses (3R)-hydroxybutanoate dimer + H2O = 2 (R)-3-hydroxybutanoate + H(+). It functions in the pathway lipid metabolism; butanoate metabolism. Its function is as follows. Participates in the degradation of poly-3-hydroxybutyrate (PHB). It works downstream of poly(3-hydroxybutyrate) depolymerase, hydrolyzing D(-)-3-hydroxybutyrate oligomers of various length (3HB-oligomers) into 3HB-monomers. The protein is D-(-)-3-hydroxybutyrate oligomer hydrolase of Ralstonia nicotianae (strain ATCC BAA-1114 / GMI1000) (Ralstonia solanacearum).